We begin with the raw amino-acid sequence, 247 residues long: HTH-type transcriptional regulator SarU (247 aa).

2 consecutive DNA-binding regions (H-T-H motif) follow at residues 53–76 (LKEI…SLSK) and 178–201 (LKDL…RLNN).

The protein belongs to the SarA family.

It is found in the cytoplasm. Positive regulator of RNAII and RNAIII in a cell density-dependent manner. It can contribute to the expression of virulence genes controlled by agr. May also regulate target genes via an agr-independent pathway. The polypeptide is HTH-type transcriptional regulator SarU (sarU) (Staphylococcus aureus (strain COL)).